Consider the following 140-residue polypeptide: Large ribosomal subunit protein uL11 (140 aa).

It belongs to the universal ribosomal protein uL11 family. In terms of assembly, part of the ribosomal stalk of the 50S ribosomal subunit. Interacts with L10 and the large rRNA to form the base of the stalk. L10 forms an elongated spine to which L12 dimers bind in a sequential fashion forming a multimeric L10(L12)X complex. One or more lysine residues are methylated.

Its function is as follows. Forms part of the ribosomal stalk which helps the ribosome interact with GTP-bound translation factors. In Halothermothrix orenii (strain H 168 / OCM 544 / DSM 9562), this protein is Large ribosomal subunit protein uL11.